Reading from the N-terminus, the 297-residue chain is Calponin-1 (297 aa).

In terms of domain architecture, Calponin-homology (CH) spans 28 to 131; the sequence is HQREQELREW…STLLALASMA (104 aa). Residue S48 is modified to Phosphoserine. Calponin-like repeat units lie at residues 164-189, 204-229, and 243-268; these read IGLQ…RHLY, ISLQ…RQIF, and VSLQ…RQVY. At T170 the chain carries Phosphothreonine; by ROCK2. S175 is modified (phosphoserine; by ROCK2). T180 and T184 each carry phosphothreonine; by ROCK2. At T259 the chain carries Phosphothreonine; by ROCK2.

The protein belongs to the calponin family. In terms of assembly, part of cGMP kinase signaling complex at least composed of ACTA2/alpha-actin, CNN1/calponin H1, PLN/phospholamban, PRKG1 and ITPR1. As to expression, smooth muscle, and tissues containing significant amounts of smooth muscle.

In terms of biological role, thin filament-associated protein that is implicated in the regulation and modulation of smooth muscle contraction. It is capable of binding to actin, calmodulin and tropomyosin. The interaction of calponin with actin inhibits the actomyosin Mg-ATPase activity. In Rattus norvegicus (Rat), this protein is Calponin-1 (Cnn1).